The sequence spans 529 residues: Tyrosinase (529 aa).

The signal sequence occupies residues 1–18; the sequence is MFLFAMGLLLVILQPSTG. Over 19–476 the chain is Lumenal, melanosome; the sequence is QFPRVCANTQ…YLKQAHQIWP (458 aa). Residues Asn-86, Asn-111, and Asn-161 are each glycosylated (N-linked (GlcNAc...) asparagine). Cu cation is bound by residues His-180, His-202, and His-211. 2 N-linked (GlcNAc...) asparagine glycosylation sites follow: Asn-230 and Asn-290. The interval 293-313 is disordered; it reads SEGPILRNPGNNDKSRTPRLP. 2 N-linked (GlcNAc...) asparagine glycosylation sites follow: Asn-337 and Asn-356. Residues His-363 and His-367 each contribute to the Cu cation site. Asn-371 carries an N-linked (GlcNAc...) asparagine glycan. Cu cation is bound at residue His-390. A helical transmembrane segment spans residues 477 to 497; that stretch reads WLVGAAVIGGIITAVLSGLIL. Residues 498-529 are Cytoplasmic-facing; sequence ACRKKRKGTSPEIQPLLTESEDYNNVSYQSHF.

This sequence belongs to the tyrosinase family. The cofactor is Cu(2+).

The protein localises to the melanosome membrane. It localises to the melanosome. The catalysed reaction is 2 L-dopa + O2 = 2 L-dopaquinone + 2 H2O. The enzyme catalyses L-tyrosine + O2 = L-dopaquinone + H2O. This is a copper-containing oxidase that functions in the formation of pigments such as melanins and other polyphenolic compounds. Catalyzes the initial and rate limiting step in the cascade of reactions leading to melanin production from tyrosine. In addition to hydroxylating tyrosine to DOPA (3,4-dihydroxyphenylalanine), also catalyzes the oxidation of DOPA to DOPA-quinone, and possibly the oxidation of DHI (5,6-dihydroxyindole) to indole-5,6 quinone. The polypeptide is Tyrosinase (TYR) (Gallus gallus (Chicken)).